The primary structure comprises 254 residues: MSNTTMATSTILLFLLAGLAAAHGDGDTTIRLPSDGAKASRPRAAKPWDCCDNIEISRLMIYPPLYRCNDEVKQCAAACKECVEAPGGDFNGGAFVCSDWFSTVDPGPKCTAALDGLSMERPWKCCDNIKRLPTKPDPPQWRCNDELEPSQCTAACKSCREAPGPFPGKLICEDIYWGADPGPFCTPRPWGDCCDKAFCNKMNPPTCRCMDEVKECADACKDCQRVESSEPPRYVCKDRFTGHPGPVCKPRAEN.

An N-terminal signal peptide occupies residues 1 to 22 (MSNTTMATSTILLFLLAGLAAA). Positions 23–118 (HGDGDTTIRL…KCTAALDGLS (96 aa)) are excised as a propeptide. Repeats lie at residues 46-120 (KPWD…LSME), 121-187 (RPWK…FCTP), and 188-251 (RPWG…CKPR). Intrachain disulfides connect C125–C185, C126–C143, C152–C159, C156–C172, C193–C248, C194–C209, C199–C207, C216–C223, and C220–C236. Residues 252–254 (AEN) constitute a propeptide that is removed on maturation.

It belongs to the Bowman-Birk serine protease inhibitor family.

This is Bowman-Birk type bran trypsin inhibitor (RBBI3.3) from Oryza sativa subsp. japonica (Rice).